A 474-amino-acid polypeptide reads, in one-letter code: Glutamate--tRNA ligase (474 aa).

Positions 11–21 match the 'HIGH' region motif; it reads PSPTGFLHIGG. The 'KMSKS' region motif lies at 240 to 244; it reads KLSKR. Lys243 lines the ATP pocket.

Belongs to the class-I aminoacyl-tRNA synthetase family. Glutamate--tRNA ligase type 1 subfamily. As to quaternary structure, monomer.

It is found in the cytoplasm. It carries out the reaction tRNA(Glu) + L-glutamate + ATP = L-glutamyl-tRNA(Glu) + AMP + diphosphate. In terms of biological role, catalyzes the attachment of glutamate to tRNA(Glu) in a two-step reaction: glutamate is first activated by ATP to form Glu-AMP and then transferred to the acceptor end of tRNA(Glu). In Nitrobacter winogradskyi (strain ATCC 25391 / DSM 10237 / CIP 104748 / NCIMB 11846 / Nb-255), this protein is Glutamate--tRNA ligase.